Consider the following 512-residue polypeptide: Cytochrome P450 82C3 (512 aa).

The helical transmembrane segment at M1–F21 threads the bilayer. C451 serves as a coordination point for heme.

It belongs to the cytochrome P450 family. It depends on heme as a cofactor.

Its subcellular location is the membrane. The chain is Cytochrome P450 82C3 (CYP82C3) from Arabidopsis thaliana (Mouse-ear cress).